Consider the following 227-residue polypeptide: Abasic site processing protein YoaM (227 aa).

The active-site Nucleophile is Cys-2. The residue at position 2 (Cys-2) is a Thiazolidine linkage to a ring-opened DNA abasic site. The active site involves Glu-106.

Belongs to the SOS response-associated peptidase family.

Formation and reversal of DNA-protein cross-link depends on DNA context. Catalyzes formation of the thiazolidine linkage in presence of abasic sites in single-stranded DNA. Mediates the reversal of the thiazolidine cross-link in presence of double stranded DNA. In terms of biological role, sensor of abasic sites in single-stranded DNA (ssDNA) required to preserve genome integrity by promoting error-free repair of abasic sites. Recognizes and binds abasic sites in ssDNA at replication forks and chemically modifies the lesion by forming a covalent cross-link with DNA: forms a stable thiazolidine linkage between a ring-opened abasic site and the alpha-amino and sulfhydryl substituents of its N-terminal catalytic cysteine residue. The DNA-protein cross-link is then reversed: able to catalyze the reversal of the thiazolidine cross-link and cycle between a cross-link and a non-cross-linked state depending on DNA context: mediates self-reversal of the thiazolidine cross-link in double stranded DNA. May act as a protease: mediates autocatalytic processing of its N-terminal methionine in order to expose the catalytic cysteine. This is Abasic site processing protein YoaM (yoaM) from Bacillus subtilis (strain 168).